The primary structure comprises 266 residues: Dihydropteroate synthase (266 aa).

In terms of domain architecture, Pterin-binding spans 12 to 260; that stretch reads AAIMGILNVT…DVKANQDIVA (249 aa). N19 provides a ligand contact to Mg(2+). (7,8-dihydropterin-6-yl)methyl diphosphate contacts are provided by residues T59, D93, N112, D176, K212, and 248 to 250; that span reads RVH.

It belongs to the DHPS family. Homodimer or homotrimer. The cofactor is Mg(2+).

It carries out the reaction (7,8-dihydropterin-6-yl)methyl diphosphate + 4-aminobenzoate = 7,8-dihydropteroate + diphosphate. It participates in cofactor biosynthesis; tetrahydrofolate biosynthesis; 7,8-dihydrofolate from 2-amino-4-hydroxy-6-hydroxymethyl-7,8-dihydropteridine diphosphate and 4-aminobenzoate: step 1/2. In terms of biological role, catalyzes the condensation of para-aminobenzoate (pABA) with 6-hydroxymethyl-7,8-dihydropterin diphosphate (DHPt-PP) to form 7,8-dihydropteroate (H2Pte), the immediate precursor of folate derivatives. This Streptococcus pyogenes serotype M18 (strain MGAS8232) protein is Dihydropteroate synthase (folP).